A 1578-amino-acid chain; its full sequence is Neurexin-3 (1578 aa).

The N-terminal stretch at 1-27 is a signal peptide; that stretch reads MSFTLHSVFFTLKVSSFLGSLVGLCLG. A Laminin G-like 1 domain is found at 28 to 202; that stretch reads LEFMGLPNQW…SVQLEAEGPC (175 aa). The Extracellular portion of the chain corresponds to 28-1503; that stretch reads LEFMGLPNQW…EVIRESNSTT (1476 aa). N-linked (GlcNAc...) asparagine glycans are attached at residues N58 and N105. One can recognise an EGF-like 1 domain in the interval 198 to 235; that stretch reads AEGPCGERPCENGGICFLLDGHPTCDCSTTGYGGTLCS. 3 cysteine pairs are disulfide-bonded: C202–C213, C207–C222, and C224–C234. 2 consecutive Laminin G-like domains span residues 260 to 444 and 451 to 643; these read ENVA…VFKC and DPIN…KSSC. D308, L325, and M378 together coordinate Ca(2+). 5 cysteine pairs are disulfide-bonded: C408–C444, C614–C643, C651–C662, C656–C671, and C673–C683. The EGF-like 2 domain occupies 647–684; that stretch reads SAKQCDSYPCKNNAVCKDGWNRFICDCTGTGYWGRTCE. Laminin G-like domains are found at residues 689 to 861 and 875 to 1050; these read ILSY…IDYC and DPVT…DRGC. Residues D736 and L753 each contribute to the Ca(2+) site. N761 carries an N-linked (GlcNAc...) asparagine glycan. Residue R811 coordinates Ca(2+). 4 disulfide bridges follow: C1022–C1050, C1057–C1068, C1062–C1077, and C1079–C1089. The 38-residue stretch at 1053–1090 folds into the EGF-like 3 domain; the sequence is PSTTCQEDSCANQGVCMQQWEGFTCDCSMTSYSGNQCN. One can recognise a Laminin G-like 6 domain in the interval 1094–1294; that stretch reads ATYIFGKSGG…NPNIKINGSV (201 aa). D1146 and I1163 together coordinate Ca(2+). An N-linked (GlcNAc...) asparagine glycan is attached at N1193. 2 residues coordinate Ca(2+): I1245 and N1247. N-linked (GlcNAc...) asparagine glycosylation is found at N1291 and N1335. Residues 1328–1352 form a disordered region; the sequence is ATTTTRKNRSTASIQPTSDDLVSSA. Positions 1337–1352 are enriched in polar residues; it reads STASIQPTSDDLVSSA. An O-linked (Xyl...) (heparan sulfate) serine glycan is attached at S1351. N-linked (GlcNAc...) asparagine glycosylation is present at N1500. A helical transmembrane segment spans residues 1504–1524; that stretch reads GMVVGIVAAAALCILILLYAM. The Cytoplasmic portion of the chain corresponds to 1525 to 1578; the sequence is YKYRNRDEGSYQVDETRNYISNSAQSNGTLMKEKQASSKSGHKKQKNKDKEYYV. Residues 1546–1578 are disordered; the sequence is NSAQSNGTLMKEKQASSKSGHKKQKNKDKEYYV.

It belongs to the neurexin family. The laminin G-like domain 2 binds to NXPH1. Isoform 8/alpha-4B binds to alpha-dystroglycan. The cytoplasmic C-terminal region binds to CASK. Specific isoforms bind neuroligins NLGN1, NLGN2 and NLGN3. Interacts with CLSTN3. Post-translationally, O-glycosylated; contains heparan sulfate. Heparan sulfate attachment is required for synapse development by mediating interactions with neuroligins. As to expression, brain.

It is found in the presynaptic cell membrane. Its function is as follows. Neuronal cell surface protein that may be involved in cell recognition and cell adhesion. May mediate intracellular signaling. The chain is Neurexin-3 (Nrxn3) from Rattus norvegicus (Rat).